Here is a 281-residue protein sequence, read N- to C-terminus: ATP phosphoribosyltransferase (281 aa).

Belongs to the ATP phosphoribosyltransferase family. Long subfamily. Requires Mg(2+) as cofactor.

It localises to the cytoplasm. The enzyme catalyses 1-(5-phospho-beta-D-ribosyl)-ATP + diphosphate = 5-phospho-alpha-D-ribose 1-diphosphate + ATP. Its pathway is amino-acid biosynthesis; L-histidine biosynthesis; L-histidine from 5-phospho-alpha-D-ribose 1-diphosphate: step 1/9. Its activity is regulated as follows. Feedback inhibited by histidine. Its function is as follows. Catalyzes the condensation of ATP and 5-phosphoribose 1-diphosphate to form N'-(5'-phosphoribosyl)-ATP (PR-ATP). Has a crucial role in the pathway because the rate of histidine biosynthesis seems to be controlled primarily by regulation of HisG enzymatic activity. The protein is ATP phosphoribosyltransferase of Salinispora tropica (strain ATCC BAA-916 / DSM 44818 / JCM 13857 / NBRC 105044 / CNB-440).